We begin with the raw amino-acid sequence, 31 residues long: Aspartate aminotransferase, cytoplasmic (31 aa).

It belongs to the class-I pyridoxal-phosphate-dependent aminotransferase family. As to quaternary structure, homodimer. Requires pyridoxal 5'-phosphate as cofactor.

It is found in the cytoplasm. The enzyme catalyses L-aspartate + 2-oxoglutarate = oxaloacetate + L-glutamate. It carries out the reaction L-cysteine + 2-oxoglutarate = 2-oxo-3-sulfanylpropanoate + L-glutamate. The catalysed reaction is (2S)-2-aminobutanoate + 2-oxoglutarate = 2-oxobutanoate + L-glutamate. It catalyses the reaction 3-sulfino-L-alanine + 2-oxoglutarate = 3-sulfinopyruvate + L-glutamate. In terms of biological role, biosynthesis of L-glutamate from L-aspartate or L-cysteine. Important regulator of levels of glutamate, the major excitatory neurotransmitter of the vertebrate central nervous system. Acts as a scavenger of glutamate in brain neuroprotection. The aspartate aminotransferase activity is involved in hepatic glucose synthesis during development and in adipocyte glyceroneogenesis. Using L-cysteine as substrate, regulates levels of mercaptopyruvate, an important source of hydrogen sulfide. Mercaptopyruvate is converted into H(2)S via the action of 3-mercaptopyruvate sulfurtransferase (3MST). Hydrogen sulfide is an important synaptic modulator and neuroprotectant in the brain. This chain is Aspartate aminotransferase, cytoplasmic, found in Oryctolagus cuniculus (Rabbit).